The sequence spans 250 residues: 4-hydroxy-tetrahydrodipicolinate reductase (250 aa).

Residues 10-15 (GAKGRI), 78-80 (GTT), and 105-108 (APNF) contribute to the NAD(+) site. His135 functions as the Proton donor/acceptor in the catalytic mechanism. A (S)-2,3,4,5-tetrahydrodipicolinate-binding site is contributed by His136. The active-site Proton donor is Lys139. 145 to 146 (GT) serves as a coordination point for (S)-2,3,4,5-tetrahydrodipicolinate.

The protein belongs to the DapB family.

It is found in the cytoplasm. The catalysed reaction is (S)-2,3,4,5-tetrahydrodipicolinate + NAD(+) + H2O = (2S,4S)-4-hydroxy-2,3,4,5-tetrahydrodipicolinate + NADH + H(+). The enzyme catalyses (S)-2,3,4,5-tetrahydrodipicolinate + NADP(+) + H2O = (2S,4S)-4-hydroxy-2,3,4,5-tetrahydrodipicolinate + NADPH + H(+). Its pathway is amino-acid biosynthesis; L-lysine biosynthesis via DAP pathway; (S)-tetrahydrodipicolinate from L-aspartate: step 4/4. Functionally, catalyzes the conversion of 4-hydroxy-tetrahydrodipicolinate (HTPA) to tetrahydrodipicolinate. This is 4-hydroxy-tetrahydrodipicolinate reductase from Streptomyces coelicolor (strain ATCC BAA-471 / A3(2) / M145).